Reading from the N-terminus, the 286-residue chain is D-tagatose-1,6-bisphosphate aldolase subunit KbaY (286 aa).

Residue Asp82 is the Proton donor of the active site. Positions 83 and 180 each coordinate Zn(2+). Residue Gly181 participates in dihydroxyacetone phosphate binding. A Zn(2+)-binding site is contributed by His208. Residues 209-211 and 230-233 contribute to the dihydroxyacetone phosphate site; these read GAS and NVAT.

Belongs to the class II fructose-bisphosphate aldolase family. TagBP aldolase KbaY subfamily. Homotetramer. Forms a complex with KbaZ. Zn(2+) serves as cofactor.

The catalysed reaction is D-tagatofuranose 1,6-bisphosphate = D-glyceraldehyde 3-phosphate + dihydroxyacetone phosphate. It participates in carbohydrate metabolism; D-tagatose 6-phosphate degradation; D-glyceraldehyde 3-phosphate and glycerone phosphate from D-tagatose 6-phosphate: step 2/2. In terms of biological role, catalytic subunit of the tagatose-1,6-bisphosphate aldolase KbaYZ, which catalyzes the reversible aldol condensation of dihydroxyacetone phosphate (DHAP or glycerone-phosphate) with glyceraldehyde 3-phosphate (G3P) to produce tagatose 1,6-bisphosphate (TBP). Requires KbaZ subunit for full activity and stability. This chain is D-tagatose-1,6-bisphosphate aldolase subunit KbaY, found in Escherichia coli O45:K1 (strain S88 / ExPEC).